Reading from the N-terminus, the 136-residue chain is Cancer/testis antigen 62 (136 aa).

The segment at 1–22 is disordered; that stretch reads MMHTTSYRRLSPPHLTDQPSAY.

In terms of tissue distribution, testis specific. Expressed in cancer cell lines.

In Homo sapiens (Human), this protein is Cancer/testis antigen 62 (CT62).